The chain runs to 255 residues: Tryptophan synthase alpha chain (255 aa).

Residues E44 and D55 each act as proton acceptor in the active site.

Belongs to the TrpA family. In terms of assembly, tetramer of two alpha and two beta chains.

It carries out the reaction (1S,2R)-1-C-(indol-3-yl)glycerol 3-phosphate + L-serine = D-glyceraldehyde 3-phosphate + L-tryptophan + H2O. It participates in amino-acid biosynthesis; L-tryptophan biosynthesis; L-tryptophan from chorismate: step 5/5. Its function is as follows. The alpha subunit is responsible for the aldol cleavage of indoleglycerol phosphate to indole and glyceraldehyde 3-phosphate. The sequence is that of Tryptophan synthase alpha chain from Dehalococcoides mccartyi (strain ATCC BAA-2100 / JCM 16839 / KCTC 5957 / BAV1).